The chain runs to 196 residues: Probable thymidylate kinase (196 aa).

Residue 7-14 participates in ATP binding; that stretch reads GIDGSGKS.

It belongs to the thymidylate kinase family.

It carries out the reaction dTMP + ATP = dTDP + ADP. The protein is Probable thymidylate kinase of Natronomonas pharaonis (strain ATCC 35678 / DSM 2160 / CIP 103997 / JCM 8858 / NBRC 14720 / NCIMB 2260 / Gabara) (Halobacterium pharaonis).